Here is a 220-residue protein sequence, read N- to C-terminus: UPF0319 protein YccT (220 aa).

Positions 1–20 (MKTGALATFLALCLPVTVFA) are cleaved as a signal peptide.

This sequence belongs to the UPF0319 family.

In Salmonella paratyphi A (strain ATCC 9150 / SARB42), this protein is UPF0319 protein YccT.